The sequence spans 119 residues: Protein FAM24A-like (119 aa).

The N-terminal stretch at 1 to 40 (MYKPFDLRTIITIIIGCGILTAMFLLIGLVLCLYSKISKA) is a signal peptide.

It belongs to the FAM24 family.

The protein resides in the secreted. This chain is Protein FAM24A-like, found in Mus musculus (Mouse).